Here is a 451-residue protein sequence, read N- to C-terminus: Glutamyl-tRNA reductase (451 aa).

Residues 49–52, S109, 114–116, and Q120 each bind substrate; these read TCNR and EQQ. C50 acts as the Nucleophile in catalysis. Position 190–195 (190–195) interacts with NADP(+); sequence GAGAMG.

The protein belongs to the glutamyl-tRNA reductase family. Homodimer.

It catalyses the reaction (S)-4-amino-5-oxopentanoate + tRNA(Glu) + NADP(+) = L-glutamyl-tRNA(Glu) + NADPH + H(+). The protein operates within porphyrin-containing compound metabolism; protoporphyrin-IX biosynthesis; 5-aminolevulinate from L-glutamyl-tRNA(Glu): step 1/2. Catalyzes the NADPH-dependent reduction of glutamyl-tRNA(Glu) to glutamate 1-semialdehyde (GSA). The protein is Glutamyl-tRNA reductase of Mycolicibacterium smegmatis (strain ATCC 700084 / mc(2)155) (Mycobacterium smegmatis).